The sequence spans 306 residues: Ribosomal protein L11 methyltransferase (306 aa).

Positions 152, 179, 201, and 243 each coordinate S-adenosyl-L-methionine.

Belongs to the methyltransferase superfamily. PrmA family.

The protein localises to the cytoplasm. It carries out the reaction L-lysyl-[protein] + 3 S-adenosyl-L-methionine = N(6),N(6),N(6)-trimethyl-L-lysyl-[protein] + 3 S-adenosyl-L-homocysteine + 3 H(+). Its function is as follows. Methylates ribosomal protein L11. This Geobacter sp. (strain M21) protein is Ribosomal protein L11 methyltransferase.